The sequence spans 422 residues: Zinc finger protein 550 (422 aa).

The KRAB domain maps to 12 to 83 (VTFKDVAVTF…KRGLSHATCA (72 aa)). The segment at 113 to 158 (LESSTSSDSRLGRARDEEGLLEMQKGKVTPETDLHKETHLGKVSLE) is disordered. Basic and acidic residues predominate over residues 122 to 152 (RLGRARDEEGLLEMQKGKVTPETDLHKETHL). 8 consecutive C2H2-type zinc fingers follow at residues 203–225 (YKCK…QRVH), 231–253 (YECN…YLIH), 259–281 (YKCL…HPIH), 287–309 (YECS…NRTH), 315–337 (FECK…YIIH), 343–365 (YDCM…QRIH), 371–393 (YECT…SVIH), and 399–421 (YKCI…QRVH).

Belongs to the krueppel C2H2-type zinc-finger protein family.

The protein resides in the nucleus. Functionally, may be involved in transcriptional regulation. In Homo sapiens (Human), this protein is Zinc finger protein 550 (ZNF550).